A 437-amino-acid chain; its full sequence is Probable eukaryotic translation initiation factor 5-2 (437 aa).

29-36 (GKGNGIKT) is a binding site for GTP. 2 stretches are compositionally biased toward basic and acidic residues: residues 148 to 179 (EQKK…EQRK) and 191 to 212 (KDSK…HDEN). Disordered stretches follow at residues 148 to 231 (EQKK…WQTD) and 262 to 284 (EKKA…PPQE). Residue Ser-201 is modified to Phosphoserine; by CK2. Over residues 213–226 (ALEVDEDEDDDDGV) the composition is skewed to acidic residues. Thr-230 is subject to Phosphothreonine; by CK2. One can recognise a W2 domain in the interval 278-436 (ENPPPQEKNL…QSAESESEEE (159 aa)). A phosphoserine; by CK2 mark is found at Ser-428, Ser-431, and Ser-433.

Belongs to the eIF-2-beta/eIF-5 family. Phosphorylated at Ser-201, Thr-230, Ser-428, Ser-431, and Ser-433 by CK2.

Functionally, catalyzes the hydrolysis of GTP bound to the 40S ribosomal initiation complex (40S.mRNA.Met-tRNA[F].eIF-2.GTP) with the subsequent joining of a 60S ribosomal subunit resulting in the release of eIF-2 and the guanine nucleotide. The subsequent joining of a 60S ribosomal subunit results in the formation of a functional 80S initiation complex (80S.mRNA.Met-tRNA[F]). This Arabidopsis thaliana (Mouse-ear cress) protein is Probable eukaryotic translation initiation factor 5-2.